A 162-amino-acid chain; its full sequence is Cyclic pyranopterin monophosphate synthase (162 aa).

Residues 75 to 77 (LCH) and 113 to 114 (ME) each bind substrate. The active site involves D128.

It belongs to the MoaC family. Homohexamer; trimer of dimers.

It carries out the reaction (8S)-3',8-cyclo-7,8-dihydroguanosine 5'-triphosphate = cyclic pyranopterin phosphate + diphosphate. It participates in cofactor biosynthesis; molybdopterin biosynthesis. Functionally, catalyzes the conversion of (8S)-3',8-cyclo-7,8-dihydroguanosine 5'-triphosphate to cyclic pyranopterin monophosphate (cPMP). The sequence is that of Cyclic pyranopterin monophosphate synthase from Burkholderia ambifaria (strain MC40-6).